Consider the following 517-residue polypeptide: GMP synthase [glutamine-hydrolyzing] (517 aa).

In terms of domain architecture, Glutamine amidotransferase type-1 spans 9-202 (KIIVLDYGSQ…AFNVCKAKGD (194 aa)). Residue Cys86 is the Nucleophile of the active site. Residues His176 and Glu178 contribute to the active site. Residues 203–392 (WSMDSFIDME…LGMPDEIVWR (190 aa)) form the GMPS ATP-PPase domain. 230–236 (SGGVDSS) contacts ATP.

In terms of assembly, homodimer.

It carries out the reaction XMP + L-glutamine + ATP + H2O = GMP + L-glutamate + AMP + diphosphate + 2 H(+). It participates in purine metabolism; GMP biosynthesis; GMP from XMP (L-Gln route): step 1/1. Catalyzes the synthesis of GMP from XMP. The sequence is that of GMP synthase [glutamine-hydrolyzing] from Streptococcus mutans serotype c (strain ATCC 700610 / UA159).